The following is a 490-amino-acid chain: Probable glycine dehydrogenase (decarboxylating) subunit 2 (490 aa).

The residue at position 273 (Lys-273) is an N6-(pyridoxal phosphate)lysine.

This sequence belongs to the GcvP family. C-terminal subunit subfamily. As to quaternary structure, the glycine cleavage system is composed of four proteins: P, T, L and H. In this organism, the P 'protein' is a heterodimer of two subunits. Pyridoxal 5'-phosphate serves as cofactor.

It carries out the reaction N(6)-[(R)-lipoyl]-L-lysyl-[glycine-cleavage complex H protein] + glycine + H(+) = N(6)-[(R)-S(8)-aminomethyldihydrolipoyl]-L-lysyl-[glycine-cleavage complex H protein] + CO2. Functionally, the glycine cleavage system catalyzes the degradation of glycine. The P protein binds the alpha-amino group of glycine through its pyridoxal phosphate cofactor; CO(2) is released and the remaining methylamine moiety is then transferred to the lipoamide cofactor of the H protein. The polypeptide is Probable glycine dehydrogenase (decarboxylating) subunit 2 (Staphylococcus aureus (strain Mu50 / ATCC 700699)).